The following is a 409-amino-acid chain: Nucleoprotein (409 aa).

Disordered stretches follow at residues 1-32, 44-69, 121-194, and 238-259; these read MASG…SSGN, LNSP…QQHG, ADVK…GSED, and VDQV…DKMN. Residues 29–160 form an RNA-binding region; it reads SSGNASWFQA…GNFRWDFIPL (132 aa). Residues 31 to 156 form the CoV N NTD domain; it reads GNASWFQAIK…GGPDGNFRWD (126 aa). Low complexity predominate over residues 162–179; sequence RGRSGRSTAASSAASSRP. Composition is skewed to basic and acidic residues over residues 180–192 and 247–259; these read PSRE…RSGS and KGKE…DKMN. Phosphoserine; by host occurs at positions 190 and 192. Positions 215–331 constitute a CoV N CTD domain; that stretch reads TKAKADEMAH…QCVDGVGTRP (117 aa). The dimerization stretch occupies residues 226 to 333; sequence RYCKRTIPPG…VDGVGTRPKD (108 aa). Cysteines 320 and 323 form a disulfide. Positions 326 to 409 are disordered; the sequence is GVGTRPKDDE…GDSALGENEL (84 aa). Over residues 341–356 the composition is skewed to low complexity; sequence RSSSRPATRTSSPAPR. Basic residues predominate over residues 358-367; sequence QRLKKEKRPK. Over residues 368-384 the composition is skewed to basic and acidic residues; that stretch reads KQDDEVDKALTSDEERN. A Phosphothreonine; by host modification is found at Thr-378. Ser-379 is modified (phosphoserine; by host).

It belongs to the gammacoronavirus nucleocapsid protein family. In terms of assembly, homooligomer. Both monomeric and oligomeric forms interact with RNA. Interacts with protein M. Interacts with NSP3; this interaction serves to tether the genome to the newly translated replicase-transcriptase complex at a very early stage of infection. ADP-ribosylated. The ADP-ribosylation is retained in the virion during infection. In terms of processing, phosphorylated on serine and threonine residues.

The protein localises to the virion. The protein resides in the host endoplasmic reticulum-Golgi intermediate compartment. It is found in the host Golgi apparatus. Packages the positive strand viral genome RNA into a helical ribonucleocapsid (RNP) and plays a fundamental role during virion assembly through its interactions with the viral genome and membrane protein M. Plays an important role in enhancing the efficiency of subgenomic viral RNA transcription as well as viral replication. The polypeptide is Nucleoprotein (Gallus gallus (Chicken)).